A 357-amino-acid chain; its full sequence is UPF0283 membrane protein BSUIS_A1077 (357 aa).

Residues 1–36 form a disordered region; sequence MSDKTPRKPTAFRLEQPARVSAASEQEEPRHPRAVK. The span at 27 to 36 shows a compositional bias: basic and acidic residues; it reads EEPRHPRAVK. A run of 2 helical transmembrane segments spans residues 78 to 98 and 109 to 129; these read ILFGALGILVSFAIGIWTEDL and LGWTALGVAMVALAAFAAIIL.

This sequence belongs to the UPF0283 family.

The protein resides in the cell inner membrane. This chain is UPF0283 membrane protein BSUIS_A1077, found in Brucella suis (strain ATCC 23445 / NCTC 10510).